Reading from the N-terminus, the 425-residue chain is Adenosine 3'-phospho 5'-phosphosulfate transporter 1 (425 aa).

9 helical membrane-spanning segments follow: residues 27–47 (FLILLGYSTVATPAAILIYYV), 102–122 (VIILLLFFFSGIQVTLVAMGV), 147–167 (TQFLIFCNRIVALVLSLMILA), 232–252 (YSWFEYGCGCTIAFGASLFLL), 263–283 (ITYTSFSGMILMAGYLLFDAF), 303–323 (MMFGVNFFSAILCAVSLIEQG), 342–360 (VFLLSLSGAIGQIFIYSTI), 365–387 (PIVFAVIMTIRQMLSIVLSTIMY), and 391–411 (LTFLAAIGFMIVFAAIFVDIH).

This sequence belongs to the nucleotide-sugar transporter family. SLC35B subfamily.

The protein resides in the golgi apparatus membrane. Functionally, mediates the transport of adenosine 3'-phospho 5'-phosphosulfate (PAPS), from cytosol into Golgi. PAPS is a universal sulfuryl donor for sulfation events that take place in the Golgi. This chain is Adenosine 3'-phospho 5'-phosphosulfate transporter 1 (pst-1), found in Caenorhabditis elegans.